We begin with the raw amino-acid sequence, 492 residues long: Alpha/beta hydrolase ucsC (492 aa).

The active-site Nucleophile is the Ser258.

It belongs to the AB hydrolase superfamily. FUS2 hydrolase family. Homodimer.

It functions in the pathway mycotoxin biosynthesis. Its function is as follows. Alpha/beta hydrolase; part of the gene cluster that mediates the biosynthesis of UCS1025A, a member of the pyrrolizidinone family that acts as a strong telomerase inhibitor and displays potent antibacterial and antitumor properties. These compounds share a hemiaminal-containing pyrrolizidinone core fused with a gamma-lactone, giving a furopyrrolizidine that is connected to a decalin fragment. The polyketide synthase module (PKS) of the PKS-NRPS ucsA is responsible for the synthesis of the polyketide backbone via the condensation of an acetyl-CoA starter unit with 6 malonyl-CoA units. The downstream nonribosomal peptide synthetase (NRPS) module then amidates the carboxyl end of the polyketide with a 2S,3S-methylproline derived from L-isoleucine by the 2-oxoglutarate-dependent dioxygenase ucsF which converts L-isoleucine to (4S,5S)-4-methylpyrroline-5-carboxylate that is further converted to 2S,3S-methylproline by the pyrroline-5-carboxylate reductase ucsG. Reductive release of the completed aminoacyl polyketide from the assembly line can form the 3-pyrrolin-2-one structure via an intramolecular Knoevenagel reaction. Because ucsA lacks a designated enoylreductase (ER) domain, the required activity is provided the enoyl reductase ucsL. This keto acyclic precursor is the substrate of the Diels-Alderase ucsH, that catalyzes the Diels-Alder cycloaddition. Oxidation of the 3S-methyl group to a carboxylate by the cytochrome P450 monooxygenase ucsK allows an oxa-Michael cyclization that might involve the reductase/dehydrogenase ucsI and which furnishes the furopyrrolizidine. The oxidase ucsJ likely plays a critical role in stereoselective reduction of the C5-C6 double bond to afford the required R-configured carboxylate group. Further enolization and oxidation at C5 by an unidentified enzyme affords the last intermediate that can undergo oxa-Michael cyclization to yield UCS1025A. The protein is Alpha/beta hydrolase ucsC of Acremonium sp.